The following is a 151-amino-acid chain: Putative pre-16S rRNA nuclease (151 aa).

The protein belongs to the YqgF nuclease family.

It is found in the cytoplasm. Its function is as follows. Could be a nuclease involved in processing of the 5'-end of pre-16S rRNA. The sequence is that of Putative pre-16S rRNA nuclease from Pelagibacter ubique (strain HTCC1062).